The following is a 419-amino-acid chain: ATP-dependent RNA helicase RhlB (419 aa).

Positions glutamine 9–alanine 37 match the Q motif motif. A Helicase ATP-binding domain is found at leucine 40–valine 217. An ATP-binding site is contributed by alanine 53 to threonine 60. Positions aspartate 163–aspartate 166 match the DEAD box motif. The Helicase C-terminal domain maps to lysine 241–isoleucine 388.

It belongs to the DEAD box helicase family. RhlB subfamily. Component of the RNA degradosome, which is a multiprotein complex involved in RNA processing and mRNA degradation.

The protein localises to the cytoplasm. It carries out the reaction ATP + H2O = ADP + phosphate + H(+). Functionally, DEAD-box RNA helicase involved in RNA degradation. Has RNA-dependent ATPase activity and unwinds double-stranded RNA. The chain is ATP-dependent RNA helicase RhlB from Histophilus somni (strain 129Pt) (Haemophilus somnus).